The chain runs to 118 residues: Diacylglycerol kinase (118 aa).

A divalent metal cation is bound at residue glutamate 28. Helical transmembrane passes span 29–49 and 55–75; these read TAFR…FFLG and IILM…NSAV. Glutamate 69 serves as the catalytic Proton acceptor. Glutamate 76 provides a ligand contact to a divalent metal cation. The chain crosses the membrane as a helical span at residues 98 to 118; the sequence is SASVFIALCIVGIVWGGILFF.

The protein belongs to the bacterial diacylglycerol kinase family. Mg(2+) is required as a cofactor.

Its subcellular location is the cell inner membrane. It catalyses the reaction a 1,2-diacyl-sn-glycerol + ATP = a 1,2-diacyl-sn-glycero-3-phosphate + ADP + H(+). Functionally, catalyzes the ATP-dependent phosphorylation of sn-l,2-diacylglycerol (DAG) to phosphatidic acid. Involved in the recycling of diacylglycerol produced as a by-product during membrane-derived oligosaccharide (MDO) biosynthesis. The polypeptide is Diacylglycerol kinase (dgkA) (Haemophilus influenzae (strain ATCC 51907 / DSM 11121 / KW20 / Rd)).